The following is a 282-amino-acid chain: Bis(5'-nucleosyl)-tetraphosphatase, symmetrical (282 aa).

The protein belongs to the Ap4A hydrolase family.

The enzyme catalyses P(1),P(4)-bis(5'-adenosyl) tetraphosphate + H2O = 2 ADP + 2 H(+). Its function is as follows. Hydrolyzes diadenosine 5',5'''-P1,P4-tetraphosphate to yield ADP. This Shigella dysenteriae serotype 1 (strain Sd197) protein is Bis(5'-nucleosyl)-tetraphosphatase, symmetrical.